The sequence spans 662 residues: Replication protein E1 (662 aa).

Positions 28–38 (VDRRTGDKPSS) are enriched in basic and acidic residues. Positions 28 to 60 (VDRRTGDKPSSDEDEDEDADEGEDFVDFIDDRP) are disordered. The span at 39 to 55 (DEDEDEDADEGEDFVDF) shows a compositional bias: acidic residues. A Nuclear localization signal motif is present at residues 88–90 (KRK). Phosphoserine; by host is present on residues Ser-94, Ser-98, and Ser-111. A Nuclear export signal motif is present at residues 110–119 (LSPRLDAIKL). A disordered region spans residues 160-197 (TQDGRQDADEGSGRNVGGNGGQEEERAGGDGEESQTQG). The DNA-binding region stretch occupies residues 199-365 (QTDKAACGVL…QTMVGHALEE (167 aa)). Residues 464 to 614 (VEFIPFLCAF…FPLTTQGEPL (151 aa)) form the SF3 helicase domain. 490 to 497 (GPADTGKS) serves as a coordination point for ATP. Lys-571 participates in a covalent cross-link: Glycyl lysine isopeptide (Lys-Gly) (interchain with G-Cter in SUMO). Positions 637–662 (DPDDEEENGNPSEPFRCVPGQNARTL) are disordered.

Belongs to the papillomaviridae E1 protein family. In terms of assembly, can form hexamers. Interacts with E2 protein; this interaction increases E1 DNA binding specificity. Interacts with host DNA polymerase subunit POLA2. Interacts with host single stranded DNA-binding protein RPA1. Interacts with host TOP1; this interaction stimulates the enzymatic activity of TOP1. Post-translationally, phosphorylated. Sumoylated.

It localises to the host nucleus. It catalyses the reaction Couples ATP hydrolysis with the unwinding of duplex DNA by translocating in the 3'-5' direction.. The enzyme catalyses ATP + H2O = ADP + phosphate + H(+). Functionally, ATP-dependent DNA 3'-5' helicase required for initiation of viral DNA replication. It forms a complex with the viral E2 protein. The E1-E2 complex binds to the replication origin which contains binding sites for both proteins. During the initial step, a dimer of E1 interacts with a dimer of protein E2 leading to a complex that binds the viral origin of replication with high specificity. Then, a second dimer of E1 displaces the E2 dimer in an ATP-dependent manner to form the E1 tetramer. Following this, two E1 monomers are added to each half of the site, which results in the formation of two E1 trimers on the viral ori. Subsequently, two hexamers will be created. The double hexamer acts as a bi-directional helicase machinery and unwinds the viral DNA and then recruits the host DNA polymerase to start replication. This is Replication protein E1 from Homo sapiens (Human).